Reading from the N-terminus, the 292-residue chain is TFYDESCPDVSNIVRRVVQQALVSDERAGARLIRLHFHDCFVNGCDGSVLLEDQPGVVSELAAPGNANITGFNIVNNIKAAVEKACPGVVSCADILAIASVGSVNLAGGPCWEVQLGRRDSRRANLQGAIDGLPSPFENVTQLKRKFDRVDLDSTDLVALSGAHTFGKSRCQFFDRRLNVSNPDSTLNPRYAQQLRQACSSGRDTFVNLDPTTPNKFDKNYYTNLQSNTGPLTSDQVLHSTPGEDTVKIVNLFAASQNQFFESFGQSMINMGNIQPLTGNQGEIRSNCRRLN.

Intrachain disulfides connect C7–C86, C40–C45, C92–C288, and C171–C199. Residue H38 is the Proton acceptor of the active site. 5 residues coordinate Ca(2+): D39, V42, G44, D46, and S48. The N-linked (GlcNAc...) asparagine glycan is linked to N68. P134 contributes to the substrate binding site. N139 carries an N-linked (GlcNAc...) asparagine glycan. H164 contacts heme b. Position 165 (T165) interacts with Ca(2+). N-linked (GlcNAc...) asparagine glycosylation occurs at N179. Residues D210, T213, and D218 each contribute to the Ca(2+) site.

This sequence belongs to the peroxidase family. Classical plant (class III) peroxidase subfamily. Ca(2+) serves as cofactor. Heme b is required as a cofactor.

The enzyme catalyses 2 a phenolic donor + H2O2 = 2 a phenolic radical donor + 2 H2O. Functionally, removal of H(2)O(2), oxidation of toxic reductants, biosynthesis and degradation of lignin, suberization, auxin catabolism, response to environmental stresses such as wounding, pathogen attack and oxidative stress. These functions might be dependent on each isozyme/isoform in each plant tissue. The polypeptide is Peroxidase 2 (Cucumis sativus (Cucumber)).